We begin with the raw amino-acid sequence, 265 residues long: Capsule polysaccharide export inner-membrane protein CtrC (265 aa).

The next 6 membrane-spanning stretches (helical) occupy residues 37 to 57 (IGFL…VLMW), 64 to 84 (NVSA…MMMW), 121 to 141 (IAGA…IGWI), 147 to 167 (IFYM…LGLV), 178 to 198 (FGKV…VFFF), and 236 to 256 (NPWY…AVVA). The region spanning 37-258 (IGFLWLFVEP…LLGLAVVARF (222 aa)) is the ABC transmembrane type-2 domain.

It belongs to the ABC-2 integral membrane protein family.

It is found in the cell inner membrane. In terms of biological role, may form an ATP-driven capsule polysaccharide export apparatus, in association with the CtrB and CtrD proteins. This Neisseria meningitidis serogroup A / serotype 4A (strain DSM 15465 / Z2491) protein is Capsule polysaccharide export inner-membrane protein CtrC (ctrC).